Reading from the N-terminus, the 541-residue chain is Membrane protein insertase YidC (541 aa).

5 helical membrane-spanning segments follow: residues 7–27 (LLVIALLFISFLVYQQWQLDY), 346–368 (IVQNWGLAIIGVTLVVKAILYPL), 416–436 (LGGCLPILLQMPIFIALYWTF), 454–474 (LSAQDPYYILPILMGASMFLL), and 495–515 (PLIFMVFFLWFPSGLVLYWLV).

It belongs to the OXA1/ALB3/YidC family. Type 1 subfamily. Interacts with the Sec translocase complex via SecD. Specifically interacts with transmembrane segments of nascent integral membrane proteins during membrane integration.

It localises to the cell inner membrane. Its function is as follows. Required for the insertion and/or proper folding and/or complex formation of integral membrane proteins into the membrane. Involved in integration of membrane proteins that insert both dependently and independently of the Sec translocase complex, as well as at least some lipoproteins. Aids folding of multispanning membrane proteins. This chain is Membrane protein insertase YidC, found in Pasteurella multocida (strain Pm70).